The chain runs to 181 residues: Dual-action ribosomal maturation protein DarP (181 aa).

Positions 1 to 24 (MTGIKRPMSQYQDDNEWEDWGPSK) are disordered.

This sequence belongs to the DarP family.

The protein resides in the cytoplasm. Functionally, member of a network of 50S ribosomal subunit biogenesis factors which assembles along the 30S-50S interface, preventing incorrect 23S rRNA structures from forming. Promotes peptidyl transferase center (PTC) maturation. The sequence is that of Dual-action ribosomal maturation protein DarP from Aeromonas hydrophila subsp. hydrophila (strain ATCC 7966 / DSM 30187 / BCRC 13018 / CCUG 14551 / JCM 1027 / KCTC 2358 / NCIMB 9240 / NCTC 8049).